Reading from the N-terminus, the 542-residue chain is Chaperonin GroEL (542 aa).

ATP contacts are provided by residues 29 to 32 (TLGP), 86 to 90 (DGTTT), glycine 413, 476 to 478 (NAA), and aspartate 492.

The protein belongs to the chaperonin (HSP60) family. As to quaternary structure, forms a cylinder of 14 subunits composed of two heptameric rings stacked back-to-back. Interacts with the co-chaperonin GroES.

It localises to the cytoplasm. The catalysed reaction is ATP + H2O + a folded polypeptide = ADP + phosphate + an unfolded polypeptide.. Functionally, together with its co-chaperonin GroES, plays an essential role in assisting protein folding. The GroEL-GroES system forms a nano-cage that allows encapsulation of the non-native substrate proteins and provides a physical environment optimized to promote and accelerate protein folding. This chain is Chaperonin GroEL, found in Lactococcus lactis subsp. cremoris (strain SK11).